A 1071-amino-acid polypeptide reads, in one-letter code: Nonribosomal peptide synthetase flvI (1071 aa).

The segment at 33 to 417 is adenylation; it reads RRVLEQHDAP…GSLHFISRKD (385 aa). The region spanning 552–628 is the Carrier domain; that stretch reads MPLTEIELKM…MLCQNIKTDV (77 aa). S589 carries the O-(pantetheine 4'-phosphoryl)serine modification. The tract at residues 689–961 is condensation; it reads NYTLRLEFKL…IDDRDIEQLS (273 aa).

The protein belongs to the NRP synthetase family.

The catalysed reaction is (2S)-5,5-dimethylpiperidine-2-carboxylate + 10-hydroxy-pre-flavunoidine + ATP = flavunoidine + AMP + diphosphate + H(+). Its pathway is secondary metabolite biosynthesis; terpenoid biosynthesis. Functionally, nonribosomal peptide synthetase; part of the gene cluster that mediates the biosynthesis of flavunoidine, an alkaloidal terpenoid with a tetracyclic cage-like core connected to dimethylcadaverine via a C-N bond and acylated with 5,5-dimethyl-L-pipecolate. The tetracyclic core is synthesized by the terpene cyclase flvE and the cytochrome P450 monooxygenase flvD. The terpene cyclase flvE catalyzes the cyclization of farnesyl pyrophosphate (FPP) to form (1R,4R,5S)-(+)-acoradiene and the cytochrome P450 monooxygenase flvD is then responsible for oxidative conversion of (1R,4R,5S)-(+)-acoradiene into the tetracyclic cage present in the final product flavunoidine. In parallel, the N-methyltransferase flvH dimethylates L-lysine to give N,N-dimethyl-L-Lysin which is decarboxylated by flvG to afford dimethylcadaverine. The terpene cyclase-like protein flvF is the enzyme that attaches the dimethylcadaverine precusor at the C-7 of the tetracyclic cage to yield pre-flavunoidine. The cytochrome monooxygenase flvC hydroxylates the C-10 position of pre-flavunoidine whereas the NRPS flvI acylates the terpenoid core at the hydroxylated C-10 with dimethylpipecolate to yield final flavunoidine. The bifunctional enzyme flvA and the dehydrogenase flvB are responsible for the synthesis of the dimethylpipecolate precursor. The PLP-dependent lyase domain of flvA might use L-O-acetyl-homoserine and alpha-keto-isovalerate to form an intermediary ketone that can cyclize intramolecularly to yield an imine. The imine can be reduced by flvB to yield the 6-carboxylated pipecolate. The C-terminal alpha-KG-dependent oxygenase domain of flvA is then proposed to catalyze the decarboxylation to yield dimethylpipecolate. The protein is Nonribosomal peptide synthetase flvI of Aspergillus flavus (strain ATCC 200026 / FGSC A1120 / IAM 13836 / NRRL 3357 / JCM 12722 / SRRC 167).